The primary structure comprises 154 residues: Protein phosphatase 1 regulatory subunit 27 (154 aa).

2 ANK repeats span residues 63 to 92 (SGLAALHEAVLSGNLECVKLLVKYGADIHQ) and 96 to 125 (TGWTPLHIACSDGYPDIARYLISLGADRDA).

As to quaternary structure, interacts with DYSF and PPP1CA.

In terms of biological role, inhibits phosphatase activity of protein phosphatase 1 (PP1) complexes. This chain is Protein phosphatase 1 regulatory subunit 27 (Ppp1r27), found in Mus musculus (Mouse).